Consider the following 180-residue polypeptide: Ribulose bisphosphate carboxylase small subunit, chloroplastic 4 (180 aa).

A chloroplast-targeting transit peptide spans 1 to 56; the sequence is MASSIVSSAAVATRGNGAQASMVAPFTGLKSTASFPVSRKQNLDITSIASNGGRVS.

It belongs to the RuBisCO small chain family. As to quaternary structure, heterohexadecamer of 8 large and 8 small subunits. (Microbial infection) Binds to tobamovirus movement protein; this interaction seems required for viral systemic movement.

The protein resides in the plastid. The protein localises to the chloroplast. Its subcellular location is the cell junction. It is found in the plasmodesma. Functionally, ruBisCO catalyzes two reactions: the carboxylation of D-ribulose 1,5-bisphosphate, the primary event in carbon dioxide fixation, as well as the oxidative fragmentation of the pentose substrate. Both reactions occur simultaneously and in competition at the same active site. Although the small subunit is not catalytic it is essential for maximal activity. Involved in antiviral defenses. In Solanum lycopersicum (Tomato), this protein is Ribulose bisphosphate carboxylase small subunit, chloroplastic 4.